The chain runs to 347 residues: Protein RecA (347 aa).

Residue 67 to 74 (GPESSGKT) coordinates ATP.

It belongs to the RecA family.

The protein localises to the cytoplasm. Its function is as follows. Can catalyze the hydrolysis of ATP in the presence of single-stranded DNA, the ATP-dependent uptake of single-stranded DNA by duplex DNA, and the ATP-dependent hybridization of homologous single-stranded DNAs. It interacts with LexA causing its activation and leading to its autocatalytic cleavage. This Helicobacter pylori (strain G27) protein is Protein RecA.